Here is a 344-residue protein sequence, read N- to C-terminus: Succinylglutamate desuccinylase (344 aa).

Zn(2+) is bound by residues H63, E66, and H160. Residue E224 is part of the active site.

The protein belongs to the AspA/AstE family. Succinylglutamate desuccinylase subfamily. Zn(2+) is required as a cofactor.

The enzyme catalyses N-succinyl-L-glutamate + H2O = L-glutamate + succinate. It functions in the pathway amino-acid degradation; L-arginine degradation via AST pathway; L-glutamate and succinate from L-arginine: step 5/5. Transforms N(2)-succinylglutamate into succinate and glutamate. The polypeptide is Succinylglutamate desuccinylase (Shewanella sp. (strain W3-18-1)).